A 129-amino-acid chain; its full sequence is MAREPQRLRRRERKNISSGVAHVNATFNNTMITITDAQGNAIAWSSAGMMGFKGSRKSTPYAAQVCAEDAGKKAAEHGVRTLEVEVKGPGAGRESALRALQAVGFHITSIRDVTPIPHNGVRPAKRRRV.

The protein belongs to the universal ribosomal protein uS11 family. As to quaternary structure, part of the 30S ribosomal subunit. Interacts with proteins S7 and S18. Binds to IF-3.

In terms of biological role, located on the platform of the 30S subunit, it bridges several disparate RNA helices of the 16S rRNA. Forms part of the Shine-Dalgarno cleft in the 70S ribosome. The sequence is that of Small ribosomal subunit protein uS11 from Sphingopyxis alaskensis (strain DSM 13593 / LMG 18877 / RB2256) (Sphingomonas alaskensis).